A 188-amino-acid polypeptide reads, in one-letter code: dCTP deaminase (188 aa).

DCTP is bound by residues 111-116 (KSTYAR), 135-137 (TLE), glutamine 156, tyrosine 170, and glutamine 180. The active-site Proton donor/acceptor is glutamate 137.

It belongs to the dCTP deaminase family. Homotrimer.

The catalysed reaction is dCTP + H2O + H(+) = dUTP + NH4(+). It functions in the pathway pyrimidine metabolism; dUMP biosynthesis; dUMP from dCTP (dUTP route): step 1/2. Functionally, catalyzes the deamination of dCTP to dUTP. The protein is dCTP deaminase of Ectopseudomonas mendocina (strain ymp) (Pseudomonas mendocina).